A 141-amino-acid polypeptide reads, in one-letter code: HTH-type transcriptional repressor NsrR (141 aa).

The region spanning 2–129 (QLTSFTDYGL…DNYTLADLVE (128 aa)) is the HTH rrf2-type domain. Positions 28-51 (ISEVTDVYGVSRNHMVKIINQLSR) form a DNA-binding region, H-T-H motif. Cys91, Cys96, and Cys102 together coordinate [2Fe-2S] cluster.

[2Fe-2S] cluster serves as cofactor.

Nitric oxide-sensitive repressor of genes involved in protecting the cell against nitrosative stress. May require iron for activity. The protein is HTH-type transcriptional repressor NsrR of Escherichia fergusonii (strain ATCC 35469 / DSM 13698 / CCUG 18766 / IAM 14443 / JCM 21226 / LMG 7866 / NBRC 102419 / NCTC 12128 / CDC 0568-73).